The following is a 796-amino-acid chain: Protein translocase subunit SecA 2 (796 aa).

Residues Q84, 102-106 (GEGKT), and D496 each bind ATP.

It belongs to the SecA family. In terms of assembly, monomer and homodimer. Part of the essential Sec protein translocation apparatus which comprises SecA, SecYEG and auxiliary proteins SecDF. Other proteins may also be involved.

It is found in the cell membrane. It localises to the cytoplasm. The catalysed reaction is ATP + H2O + cellular proteinSide 1 = ADP + phosphate + cellular proteinSide 2.. In terms of biological role, part of the Sec protein translocase complex. Interacts with the SecYEG preprotein conducting channel. Has a central role in coupling the hydrolysis of ATP to the transfer of proteins into and across the cell membrane, serving as an ATP-driven molecular motor driving the stepwise translocation of polypeptide chains across the membrane. This chain is Protein translocase subunit SecA 2, found in Staphylococcus aureus (strain MRSA252).